Here is a 296-residue protein sequence, read N- to C-terminus: Phosphatidylserine decarboxylase proenzyme (296 aa).

Active-site charge relay system; for autoendoproteolytic cleavage activity residues include Asp113, His169, and Ser256. The active-site Schiff-base intermediate with substrate; via pyruvic acid; for decarboxylase activity is Ser256. Position 256 is a pyruvic acid (Ser); by autocatalysis (Ser256).

The protein belongs to the phosphatidylserine decarboxylase family. PSD-B subfamily. Prokaryotic type II sub-subfamily. In terms of assembly, heterodimer of a large membrane-associated beta subunit and a small pyruvoyl-containing alpha subunit. Pyruvate serves as cofactor. Post-translationally, is synthesized initially as an inactive proenzyme. Formation of the active enzyme involves a self-maturation process in which the active site pyruvoyl group is generated from an internal serine residue via an autocatalytic post-translational modification. Two non-identical subunits are generated from the proenzyme in this reaction, and the pyruvate is formed at the N-terminus of the alpha chain, which is derived from the carboxyl end of the proenzyme. The autoendoproteolytic cleavage occurs by a canonical serine protease mechanism, in which the side chain hydroxyl group of the serine supplies its oxygen atom to form the C-terminus of the beta chain, while the remainder of the serine residue undergoes an oxidative deamination to produce ammonia and the pyruvoyl prosthetic group on the alpha chain. During this reaction, the Ser that is part of the protease active site of the proenzyme becomes the pyruvoyl prosthetic group, which constitutes an essential element of the active site of the mature decarboxylase.

The protein localises to the cell membrane. The catalysed reaction is a 1,2-diacyl-sn-glycero-3-phospho-L-serine + H(+) = a 1,2-diacyl-sn-glycero-3-phosphoethanolamine + CO2. It functions in the pathway phospholipid metabolism; phosphatidylethanolamine biosynthesis; phosphatidylethanolamine from CDP-diacylglycerol: step 2/2. In terms of biological role, catalyzes the formation of phosphatidylethanolamine (PtdEtn) from phosphatidylserine (PtdSer). The polypeptide is Phosphatidylserine decarboxylase proenzyme (Clostridium botulinum (strain Eklund 17B / Type B)).